The sequence spans 340 residues: Photosystem II assembly lipoprotein Ycf48 (340 aa).

The N-terminal stretch at 1–26 is a signal peptide; that stretch reads MTSVLGLLKPLKKAIAAIAVLVLCIG. Cys-27 is lipidated: N-palmitoyl cysteine. Cys-27 carries S-diacylglycerol cysteine lipidation.

Belongs to the Ycf48 family. As to quaternary structure, part of early PSII assembly complexes which includes D1 (psbA) and PsbI; not found in mature PSII. Binds to the lumenal side of PSII complexes. Interacts with YidC.

The protein localises to the cellular thylakoid membrane. A factor required for optimal assembly of photosystem II (PSII), acting in the early stages of PSII assembly. Also plays a role in replacement of photodamaged D1 (psbA). Assists YidC in synthesis of chlorophyll-binding proteins. The polypeptide is Photosystem II assembly lipoprotein Ycf48 (Picosynechococcus sp. (strain ATCC 27264 / PCC 7002 / PR-6) (Agmenellum quadruplicatum)).